A 78-amino-acid polypeptide reads, in one-letter code: UPF0154 protein SSU98_1719 (78 aa).

A helical transmembrane segment spans residues 3 to 23; it reads LGLAILLIVLAFAGGVALGIY.

Belongs to the UPF0154 family.

It is found in the cell membrane. The polypeptide is UPF0154 protein SSU98_1719 (Streptococcus suis (strain 98HAH33)).